The chain runs to 446 residues: Radical S-adenosyl methionine domain-containing protein 1, mitochondrial (446 aa).

Positions 15 to 277 (KGYNKLKDLP…VCEAEAMGFQ (263 aa)) constitute a Radical SAM core domain. [4Fe-4S] cluster is bound by residues Cys-34, Cys-38, and Cys-41. Residues Gly-94, 95-96 (GT), Glu-130, Gln-159, Arg-171, and Asp-195 each bind S-adenosyl-L-methionine.

This sequence belongs to the anaerobic coproporphyrinogen-III oxidase family. HemW subfamily.

Its subcellular location is the mitochondrion. May be a heme chaperone, appears to bind heme. Homologous bacterial proteins do not have oxygen-independent coproporphyrinogen-III oxidase activity. Binds 1 [4Fe-4S] cluster. The cluster is coordinated with 3 cysteines and an exchangeable S-adenosyl-L-methionine. This chain is Radical S-adenosyl methionine domain-containing protein 1, mitochondrial (rsad1), found in Dictyostelium discoideum (Social amoeba).